The following is a 393-amino-acid chain: MSLDRVDWPHATFSTPVKRIFDTQTTLDFQSSLAIHRIKYHLHKYTTLISHCSDPDPHATASSIAMVNGLMGVLDKLAHLIDETPPLPGPRRYGNLACREWHHKLDERLPQWLQEMLPSEYHEVVPELQYYLGNSFGSSTRLDYGTGHELSFMATVAALDMLGMFPHMRGADVFLLFNKYYTIMRRLILTYTLEPAGSHGVWGLDDHFHLVYILGSSQWQLLDAQAPLQPREILDKSLVREYKDTNFYCQGINFINEVKMGPFEEHSPILYDIAVTVPRWSKVCKGLLKMYSVEVLKKFPVVQHFWFGTGFFPWVNIQNGTDLPVFEEKEEESIEQANAGSPGREQTSTRFPTSTSMPPPGVPPSGNNINYLLSHQNQSHRNQTSFSRDRLRR.

The interval 328–393 is disordered; the sequence is EKEEESIEQA…TSFSRDRLRR (66 aa). 2 stretches are compositionally biased toward polar residues: residues 335-356 and 365-386; these read EQAN…TSTS and SGNN…QTSF. Serine 341 is subject to Phosphoserine.

It belongs to the PTPA-type PPIase family. Interacts with the phosphatase PP2A-like catalytic subunits PPG1, PPH3 and SIT4. Forms a ternary complex with SIT4-TAP42.

The protein resides in the cytoplasm. It localises to the nucleus. It catalyses the reaction [protein]-peptidylproline (omega=180) = [protein]-peptidylproline (omega=0). Its function is as follows. PPIases accelerate the folding of proteins. It catalyzes the cis-trans isomerization of proline imidic peptide bonds in oligopeptides. Acts as a regulatory subunit for TAP42-associated PP2A-like phosphatases modulating their activity or substrate specificity, probably by inducing a conformational change in the catalytic subunit, a direct target of the PPIase. Can reactivate inactive phosphatase PP2A-phosphatase methylesterase complexes (PP2Ai) in presence of ATP and Mg(2+) by dissociating the inactive form from the complex. Involved in the regulation of cell cycle progression, mitotic spindle formation, bud morphogenesis and DNA repair. The polypeptide is Serine/threonine-protein phosphatase 2A activator 1 (RRD1) (Saccharomyces cerevisiae (strain ATCC 204508 / S288c) (Baker's yeast)).